A 270-amino-acid chain; its full sequence is Hydroxyethylthiazole kinase (270 aa).

Methionine 47 contacts substrate. Positions 123 and 170 each coordinate ATP. Glycine 197 contributes to the substrate binding site.

Belongs to the Thz kinase family. Requires Mg(2+) as cofactor.

The enzyme catalyses 5-(2-hydroxyethyl)-4-methylthiazole + ATP = 4-methyl-5-(2-phosphooxyethyl)-thiazole + ADP + H(+). The protein operates within cofactor biosynthesis; thiamine diphosphate biosynthesis; 4-methyl-5-(2-phosphoethyl)-thiazole from 5-(2-hydroxyethyl)-4-methylthiazole: step 1/1. Its function is as follows. Catalyzes the phosphorylation of the hydroxyl group of 4-methyl-5-beta-hydroxyethylthiazole (THZ). The protein is Hydroxyethylthiazole kinase of Syntrophus aciditrophicus (strain SB).